Reading from the N-terminus, the 221-residue chain is UPF0502 protein PA14_19450 (221 aa).

The protein belongs to the UPF0502 family.

This is UPF0502 protein PA14_19450 from Pseudomonas aeruginosa (strain UCBPP-PA14).